A 921-amino-acid polypeptide reads, in one-letter code: MKNNTRFTLIVVGVLFHLLYLWSIFDIYFISPLVHGMEQKISTNNPPAKRLFLIVGDGLRADTTFDKITHPVTKKADYLAPFIRSLVQNNATYGISHTRMPTESRPGHVAMIAGFYEDVSAVTKGWKENPVDFDSFFNQTAHTYSFGSPDILPMFKDGASDPNKVDAWMYGHEYEDFTQSSIELDAYVFRHLDQLFKNSSTDKELDKQIRQDGNAFFLHLLGCDTAGHSYRPYSAEYYDNVIYIDKQVEKLVKQVEEFFGDNDTAFIFTADHGMSAFGSHGDGHPNNTRTPLVAWGAGLNRPVRLDTPEFDEYTENWNLANIKRNDVKQADIAALMSYLIGTNYPANSVGELPLAYIEGSEGQKLEALLNNAESILEQYRVKENEVINSQFVYKIYPKFAEKSPTEYLKEIKELIKKIENGEESLEPEAIRLTEELMKVTLEGLHYLTTYNWRFIRTIVTFGFLGWICYSFMIFLKLFILNNSQTTHPSILNISIFTSLGLILNYILFYQKSPLNFYLYLIFPLFFWSKIFSNTAIIRDGVNEFFKGISKAESVIIGLTIISIYEGIVYGFFHRWILSLILVSFAFYPLVCGVTDLFTNLLWILTSVGLSSFTLLDAVKIENLQQIQVAGILIVLSSAYAVMRLSQDISKYTQHLLSIQIFLVSGMLHFTSKSVISLQKREGLPAFAQVGGWAILVISLTIMPFLHYLKPNNNYQVRLLTIYLTFAPSFIILSISFEALFYFIFTAYIVQWLQIEKNIKVLKDEQKSDSNGIQLLRVAIIGFFLQQIAFFGTGNVASISSFSLDSVYRLLPVFDPFPMGALLMLKLIIPYVLLSCGLGIMNIQLDIKDYTISSLIISTSDILSLNFFYLLKTEGSWLDIGVTISNYCLAILSSLFMLILEIVGHQLLKNVTRATSSQKKTN.

At 1–9 the chain is on the cytoplasmic side; it reads MKNNTRFTL. Residues 10–30 traverse the membrane as a helical segment; that stretch reads IVVGVLFHLLYLWSIFDIYFI. Topologically, residues 31–457 are lumenal; the sequence is SPLVHGMEQK…TTYNWRFIRT (427 aa). N-linked (GlcNAc...) asparagine glycans are attached at residues Asn-90, Asn-138, Asn-198, Asn-262, and Asn-286. The chain crosses the membrane as a helical span at residues 458–478; that stretch reads IVTFGFLGWICYSFMIFLKLF. Residues 479–488 lie on the Cytoplasmic side of the membrane; it reads ILNNSQTTHP. Residues 489–509 form a helical membrane-spanning segment; that stretch reads SILNISIFTSLGLILNYILFY. Residues 510–516 lie on the Lumenal side of the membrane; that stretch reads QKSPLNF. The helical transmembrane segment at 517–537 threads the bilayer; sequence YLYLIFPLFFWSKIFSNTAII. Topologically, residues 538 to 552 are cytoplasmic; the sequence is RDGVNEFFKGISKAE. Residues 553–573 traverse the membrane as a helical segment; it reads SVIIGLTIISIYEGIVYGFFH. Topologically, residues 574–575 are lumenal; the sequence is RW. A helical transmembrane segment spans residues 576-596; that stretch reads ILSLILVSFAFYPLVCGVTDL. The Cytoplasmic portion of the chain corresponds to 597 to 599; it reads FTN. The helical transmembrane segment at 600–620 threads the bilayer; that stretch reads LLWILTSVGLSSFTLLDAVKI. Glu-621 is a topological domain (lumenal). A helical transmembrane segment spans residues 622-642; sequence NLQQIQVAGILIVLSSAYAVM. At 643 to 654 the chain is on the cytoplasmic side; the sequence is RLSQDISKYTQH. A helical membrane pass occupies residues 655–675; sequence LLSIQIFLVSGMLHFTSKSVI. The Lumenal portion of the chain corresponds to 676–684; the sequence is SLQKREGLP. A helical membrane pass occupies residues 685 to 705; it reads AFAQVGGWAILVISLTIMPFL. Residues 706–728 lie on the Cytoplasmic side of the membrane; it reads HYLKPNNNYQVRLLTIYLTFAPS. The helical transmembrane segment at 729 to 749 threads the bilayer; sequence FIILSISFEALFYFIFTAYIV. Over 750 to 777 the chain is Lumenal; the sequence is QWLQIEKNIKVLKDEQKSDSNGIQLLRV. A helical membrane pass occupies residues 778–798; that stretch reads AIIGFFLQQIAFFGTGNVASI. The Cytoplasmic segment spans residues 799-819; sequence SSFSLDSVYRLLPVFDPFPMG. Residues 820–840 form a helical membrane-spanning segment; sequence ALLMLKLIIPYVLLSCGLGIM. Topologically, residues 841 to 849 are lumenal; it reads NIQLDIKDY. A helical membrane pass occupies residues 850–870; it reads TISSLIISTSDILSLNFFYLL. The Cytoplasmic segment spans residues 871-878; it reads KTEGSWLD. The chain crosses the membrane as a helical span at residues 879–899; sequence IGVTISNYCLAILSSLFMLIL. At 900–921 the chain is on the lumenal side; the sequence is EIVGHQLLKNVTRATSSQKKTN. N-linked (GlcNAc...) asparagine glycosylation occurs at Asn-909.

It belongs to the PIGG/PIGN/PIGO family. PIGN subfamily.

Its subcellular location is the endoplasmic reticulum membrane. It participates in glycolipid biosynthesis; glycosylphosphatidylinositol-anchor biosynthesis. Its function is as follows. Ethanolamine phosphate transferase involved in glycosylphosphatidylinositol-anchor biosynthesis. Transfers ethanolamine phosphate to the first alpha-1,4-linked mannose of the glycosylphosphatidylinositol precursor of GPI-anchor. This chain is GPI ethanolamine phosphate transferase 1 (MCD4), found in Candida glabrata (strain ATCC 2001 / BCRC 20586 / JCM 3761 / NBRC 0622 / NRRL Y-65 / CBS 138) (Yeast).